The chain runs to 267 residues: Matrilysin (267 aa).

A signal peptide spans 1–17 (MRLTVLCAVCLLPGSLA). Positions 18–94 (LPLPQEAGGM…PRCGVPDVAE (77 aa)) are cleaved as a propeptide — activation peptide. A Cysteine switch motif is present at residues 85-92 (PRCGVPDV). C87 contacts Zn(2+). D153 serves as a coordination point for Ca(2+). Zn(2+) is bound by residues H163 and D165. The Ca(2+) site is built by D170, G171, G173, and T175. H178 is a Zn(2+) binding site. Residues G185, G187, and D189 each coordinate Ca(2+). Residue H191 coordinates Zn(2+). 2 residues coordinate Ca(2+): D193 and E196. A Zn(2+)-binding site is contributed by H214. Residue E215 is part of the active site. Zn(2+) is bound by residues H218 and H224.

Belongs to the peptidase M10A family. It depends on Ca(2+) as a cofactor. Zn(2+) is required as a cofactor.

It localises to the secreted. It is found in the extracellular space. Its subcellular location is the extracellular matrix. It carries out the reaction Cleavage of 14-Ala-|-Leu-15 and 16-Tyr-|-Leu-17 in B chain of insulin. No action on collagen types I, II, IV, V. Cleaves gelatin chain alpha2(I) &gt; alpha1(I).. Its function is as follows. Degrades casein, gelatins of types I, III, IV, and V, and fibronectin. Activates procollagenase. The sequence is that of Matrilysin (MMP7) from Homo sapiens (Human).